The sequence spans 272 residues: Undecaprenyl-diphosphatase (272 aa).

A run of 7 helical transmembrane segments spans residues 6-26 (SLLIAFILGVVEGLTEFLPVS), 45-65 (AKTFEVIIQLGSILAVVVMFW), 92-112 (THILLAMIPAVVLGLVFHDVI), 115-135 (LFYPQNVMYALVVGGFLLLAA), 189-209 (YAASEFSFILAVPMMMGATVL), 225-245 (MFAVGFVTAFLVALIAIKTFL), and 251-271 (ISFVPFAIYRFIVAGVVYMVF).

It belongs to the UppP family.

It is found in the cell inner membrane. The enzyme catalyses di-trans,octa-cis-undecaprenyl diphosphate + H2O = di-trans,octa-cis-undecaprenyl phosphate + phosphate + H(+). Its function is as follows. Catalyzes the dephosphorylation of undecaprenyl diphosphate (UPP). Confers resistance to bacitracin. This Pectobacterium carotovorum subsp. carotovorum (strain PC1) protein is Undecaprenyl-diphosphatase.